A 290-amino-acid polypeptide reads, in one-letter code: Arginine N-acetyltransferase avaD (290 aa).

157–163 (NQAHFEA) serves as a coordination point for acetyl-CoA.

It belongs to the acetyltransferase family. GCN5 subfamily.

It participates in secondary metabolite metabolism. Functionally, arginine N-acetyltransferase; part of the cluster that mediates the biosynthesis of a highly modified cyclo-arginine-tryptophan dipeptide (cRW). Within the pathway, avaD catalyzes the N-acetylation of the guanidine group. The first step of the pathway is perfornmed by the arginine-containing cyclodipeptide synthase (RCPDS) avaA that acts as the scaffold-generating enzyme and is responsible for formation of the cyclo-Arg-Trp (cRW) diketopiperazine. AvaB then acts as a multifunctional flavoenzyme that is responsible for generating the cyclo-Arg-formylkynurenine DKP, which can be deformylated by avaC. AvaB then further catalyzes an additional N-oxidation followed by cyclization and dehydration. The next step is an N-acetylation of the guanidine group catalyzed by the arginine N-acetyltransferase avaD. The roles of the additional enzymes identified within the ava cluster still have to be determined. The sequence is that of Arginine N-acetyltransferase avaD from Aspergillus versicolor.